A 283-amino-acid polypeptide reads, in one-letter code: Protoheme IX farnesyltransferase (283 aa).

7 consecutive transmembrane segments (helical) span residues 13-33 (ISSV…PTGL), 35-55 (GGTL…VGTL), 90-110 (ILLV…LTAV), 156-176 (LGAG…PHFL), 208-228 (MIGF…TEAA), 230-250 (WIYG…TIVF), and 262-282 (VLKA…VDWF).

It belongs to the UbiA prenyltransferase family. Protoheme IX farnesyltransferase subfamily.

It localises to the cell inner membrane. The enzyme catalyses heme b + (2E,6E)-farnesyl diphosphate + H2O = Fe(II)-heme o + diphosphate. It functions in the pathway porphyrin-containing compound metabolism; heme O biosynthesis; heme O from protoheme: step 1/1. Its function is as follows. Converts heme B (protoheme IX) to heme O by substitution of the vinyl group on carbon 2 of heme B porphyrin ring with a hydroxyethyl farnesyl side group. The sequence is that of Protoheme IX farnesyltransferase from Salinibacter ruber (strain DSM 13855 / M31).